The primary structure comprises 350 residues: HTH-type DNA-binding transcriptional activator EutR (350 aa).

An HTH araC/xylS-type domain is found at 243–344 (SRAREYVLEN…AEKPSLTLHQ (102 aa)). 2 DNA-binding regions (H-T-H motif) span residues 260 to 281 (LDLC…HAIL) and 311 to 334 (VKDA…QQLF).

It functions in the pathway amine and polyamine degradation; ethanolamine degradation. Its function is as follows. Activates the transcription of the eut operon, allowing utilization of ethanolamine (EA). Positively regulates its own transcription. Probably binds EA and vitamin B12 as effectors. Competes with ethanolamine ammonia-lysase (EAL, the first enzyme in the EA degradation pathway) for adenosylcobalamin. Ethanolamine-associated signaling mediated via this protein, but not EA degradation, impacts S.typhimurium survival within macrophages. Binds the promoter of ssrB and eutS in vitro; in mouse infection models binding to ssrB probably induces all 4 operons of pathogenicity island SPI-2. Functionally, expression of the eut operon allows this bacteria to use ethanolamine (EA) as a carbon, nitrogen and energy source. It relies on cobalamin (vitamin B12) both as a cofactor for the ethanolamine ammonia-lyase (EAL) activity and to induce the operon. EA enhances bacterial survival in macrophages in a concentration-dependent manner, suggesting it is an important nutrient in infection. This chain is HTH-type DNA-binding transcriptional activator EutR, found in Salmonella typhimurium (strain LT2 / SGSC1412 / ATCC 700720).